Consider the following 280-residue polypeptide: UDP-3-O-acyl-N-acetylglucosamine deacetylase (280 aa).

The Zn(2+) site is built by H79, H237, and D241. The Proton donor role is filled by H264.

The protein belongs to the LpxC family. Requires Zn(2+) as cofactor.

It carries out the reaction a UDP-3-O-[(3R)-3-hydroxyacyl]-N-acetyl-alpha-D-glucosamine + H2O = a UDP-3-O-[(3R)-3-hydroxyacyl]-alpha-D-glucosamine + acetate. The protein operates within glycolipid biosynthesis; lipid IV(A) biosynthesis; lipid IV(A) from (3R)-3-hydroxytetradecanoyl-[acyl-carrier-protein] and UDP-N-acetyl-alpha-D-glucosamine: step 2/6. Its function is as follows. Catalyzes the hydrolysis of UDP-3-O-myristoyl-N-acetylglucosamine to form UDP-3-O-myristoylglucosamine and acetate, the committed step in lipid A biosynthesis. The sequence is that of UDP-3-O-acyl-N-acetylglucosamine deacetylase from Chlamydia felis (strain Fe/C-56) (Chlamydophila felis).